The primary structure comprises 2210 residues: Orsellinic acid synthase ArmB (2210 aa).

Residues Leu-38–His-261 are N-terminal acylcarrier protein transacylase domain (SAT). The Ketosynthase family 3 (KS3) domain maps to Gln-391–Glu-817. Catalysis depends on for beta-ketoacyl synthase activity residues Cys-561, His-696, and His-736. The malonyl-CoA:ACP transacylase (MAT) domain stretch occupies residues Val-915–Gln-1240. The active-site For acyl/malonyl transferase activity is the Ser-1009. The interval Met-1307–Asp-1437 is N-terminal hotdog fold. One can recognise a PKS/mFAS DH domain in the interval Met-1307–Gln-1614. Residues Ile-1336 to Asn-1611 are product template (PT) domain. Catalysis depends on His-1339, which acts as the Proton acceptor; for dehydratase activity. The segment at Ala-1464–Gln-1614 is C-terminal hotdog fold. The active-site Proton donor; for dehydratase activity is Asp-1525. The region spanning Val-1660–Val-1735 is the Carrier 1 domain. At Ser-1694 the chain carries O-(pantetheine 4'-phosphoryl)serine. The interval Ala-1739–Ser-1761 is disordered. The Carrier 2 domain maps to Ser-1845–Arg-1922. Ser-1882 is modified (O-(pantetheine 4'-phosphoryl)serine). Residues Ser-1920–Leu-1946 form a disordered region. Over residues Thr-1933 to Ser-1944 the composition is skewed to acidic residues. Positions Val-1963–Asp-2202 are thioesterase (TE) domain.

It participates in secondary metabolite biosynthesis. In terms of biological role, non-reducing polyketide synthase, part of the gene cluster that mediates the biosynthesis of melleolides, a range of antifungal and phytotoxic polyketide derivatives composed of an orsellinic acid (OA) moiety esterified to various sesquiterpene alcohols. The first step in melleolides biosynthesis is performed by the delta(6)-protoilludene synthase PRO1 which catalyzes the cyclization of farnesyl diphosphate to protoilludene. The orsellinic acid synthase armB produces OA by condensing acetyl-CoA with 3 malonyl-CoA units in a three-round chain elongation reaction folowed by a C2-C7 ring closure. ArmB further catalyzes the trans-esterification of OA to the various sesquiterpene alcohols resulting from the hydroxylation of protoilludene. The melleolides cluster also includes 5 cytochrome P450 monooxygenases, 4 NAD(+)-dependent oxidoreductases, one flavin-dependent oxidoreductase, and one O-methyltransferase. The cytochrome P450 monooxygenases may be involved in protoilludene hydroxylation to elaborate melleolides with multiple alcohol groups, such as melleolide D, which carries alcohol functionalities at C-4, C-5, C-10, and C-13. The role of the NAD(+)-dependent enzymes remains unknown. Numerous melleolides, including arnamial, show 5'-O-methylation of the aromatic moiety which may be catalyzed by the methyltransferase encoded in the cluster. The flavin-dependent oxidoreductase might represent the dehydrogenase yielding the aldehyde in position 1 of arnamial and other melleolides. Finally, several halogenase localized outside of the cluster (armH1 to armH5), are able to catalyze the transfer of a single chlorine atom to the melleolide backbone, resulting in a 6'-chloromelleolide product. The polypeptide is Orsellinic acid synthase ArmB (Armillaria ostoyae (Armillaria root rot fungus)).